Reading from the N-terminus, the 310-residue chain is Porphobilinogen deaminase (310 aa).

At cysteine 240 the chain carries S-(dipyrrolylmethanemethyl)cysteine.

The protein belongs to the HMBS family. Monomer. Dipyrromethane is required as a cofactor.

The enzyme catalyses 4 porphobilinogen + H2O = hydroxymethylbilane + 4 NH4(+). It functions in the pathway porphyrin-containing compound metabolism; protoporphyrin-IX biosynthesis; coproporphyrinogen-III from 5-aminolevulinate: step 2/4. Tetrapolymerization of the monopyrrole PBG into the hydroxymethylbilane pre-uroporphyrinogen in several discrete steps. The sequence is that of Porphobilinogen deaminase from Desulfosudis oleivorans (strain DSM 6200 / JCM 39069 / Hxd3) (Desulfococcus oleovorans).